The chain runs to 206 residues: Oligoribonuclease (206 aa).

Residues 20 to 183 enclose the Exonuclease domain; the sequence is LVWLDMEMTG…ADIHESIDEL (164 aa). Tyr141 is a catalytic residue.

The protein belongs to the oligoribonuclease family.

It is found in the cytoplasm. Its function is as follows. 3'-to-5' exoribonuclease specific for small oligoribonucleotides. This is Oligoribonuclease from Burkholderia lata (strain ATCC 17760 / DSM 23089 / LMG 22485 / NCIMB 9086 / R18194 / 383).